A 535-amino-acid chain; its full sequence is Bifunctional purine biosynthesis protein PurH (535 aa).

In terms of domain architecture, MGS-like spans 6–151 (TRLPVRRALI…KNHKDVAIVV (146 aa)).

Belongs to the PurH family.

It catalyses the reaction (6R)-10-formyltetrahydrofolate + 5-amino-1-(5-phospho-beta-D-ribosyl)imidazole-4-carboxamide = 5-formamido-1-(5-phospho-D-ribosyl)imidazole-4-carboxamide + (6S)-5,6,7,8-tetrahydrofolate. It carries out the reaction IMP + H2O = 5-formamido-1-(5-phospho-D-ribosyl)imidazole-4-carboxamide. It functions in the pathway purine metabolism; IMP biosynthesis via de novo pathway; 5-formamido-1-(5-phospho-D-ribosyl)imidazole-4-carboxamide from 5-amino-1-(5-phospho-D-ribosyl)imidazole-4-carboxamide (10-formyl THF route): step 1/1. The protein operates within purine metabolism; IMP biosynthesis via de novo pathway; IMP from 5-formamido-1-(5-phospho-D-ribosyl)imidazole-4-carboxamide: step 1/1. This Ectopseudomonas mendocina (strain ymp) (Pseudomonas mendocina) protein is Bifunctional purine biosynthesis protein PurH.